The sequence spans 150 residues: MQIWVDADACPNVIKDVLFRAADRTQTQVTLVANQTIKVPPSRFIRTLRVSSGFDVADNEIVRRVEAGDLVITADIPLAAEVIEKGGAALNPRGERYTPDTIRERLNMRDFMDTMRASGIQTGGPSALSQRDRQQFANELDKWLHQAKKP.

This sequence belongs to the UPF0178 family.

This Pectobacterium carotovorum subsp. carotovorum (strain PC1) protein is UPF0178 protein PC1_0756.